A 94-amino-acid chain; its full sequence is CRISPR-associated endoribonuclease Cas2 (94 aa).

It belongs to the CRISPR-associated endoribonuclease Cas2 protein family. E.coli-subtype subfamily. Homodimer. Part of the Cas1-Cas2 complex. Forms a hexamer with 2 Cas1 dimers sandwiching a Cas2 dimer. The DNA lies across a flat surface extending from 1 Cas1 dimer, across the Cas2 dimer and contacting the other Cas1 dimer. Only 1 Cas1 protein from each dimer is catalytic, the other interacts with the Cas2 dimer and possibly target DNA.

Its function is as follows. CRISPR (clustered regularly interspaced short palindromic repeat), is an adaptive immune system that provides protection against mobile genetic elements (viruses, transposable elements and conjugative plasmids). CRISPR clusters contain sequences complementary to antecedent mobile elements and target invading nucleic acids. CRISPR clusters are transcribed and processed into CRISPR RNA (crRNA). The Cas1-Cas2 complex is involved in CRISPR adaptation, the first stage of CRISPR immunity, being required for the addition/removal of CRISPR spacers at the leader end of the CRISPR locus. The Cas1-Cas2 complex introduces staggered nicks into both strands of the CRISPR array near the leader repeat and joins the 5'-ends of the repeat strands with the 3'-ends of the new spacer sequence. Spacer DNA integration requires supercoiled target DNA and 3'-OH ends on the inserted (spacer) DNA and probably initiates with a nucleophilic attack of the C 3'-OH end of the protospacer on the minus strand of the first repeat sequence. Expression of Cas1-Cas2 in a strain lacking both genes permits spacer acquisition. Cas2 not seen to bind DNA alone; the Cas1-Cas2 complex preferentially binds CRISPR-locus DNA. Highest binding is seen to a dual forked DNA complex with 3'-overhangs and a protospacer-adjacent motif-complement specifically positioned. The protospacer DNA lies across a flat surface extending from 1 Cas1 dimer, across the Cas2 dimer and contacting the other Cas1 dimer; the 23 bp-long ds section of the DNA is bracketed by 1 Tyr-22 from each of the Cas1 dimers. Cas1 cuts within the 3'-overhang, to generate a 33-nucleotide DNA that is probably incorporated into the CRISPR leader by a cut-and-paste mechanism. This subunit's probable nuclease activity is not required for spacer acquisition. The polypeptide is CRISPR-associated endoribonuclease Cas2 (ygbF) (Escherichia coli (strain K12)).